The chain runs to 857 residues: Linoleate 9S-lipoxygenase 6 (857 aa).

Positions 26-156 constitute a PLAT domain; that stretch reads NALDFTDLAG…RYKSDRIFFA (131 aa). Residues 159-857 form the Lipoxygenase domain; the sequence is PYLPSETPEL…GKGIPNSVSI (699 aa). Residues 205-243 are disordered; that stretch reads NPDQGEQNVRTTLGGSADYPYPRRGRTGRPPTRTDPKSE. A compositionally biased stretch (polar residues) spans 208-218; the sequence is QGEQNVRTTLG. Histidine 518, histidine 523, histidine 709, asparagine 713, and isoleucine 857 together coordinate Fe cation.

Belongs to the lipoxygenase family. In terms of assembly, monomer. The cofactor is Fe cation. In terms of tissue distribution, expressed in tubers and roots. Detected in leaves, petioles and stems.

It is found in the cytoplasm. The catalysed reaction is (9Z,12Z)-octadecadienoate + O2 = (9S)-hydroperoxy-(10E,12Z)-octadecadienoate. It functions in the pathway lipid metabolism; oxylipin biosynthesis. In terms of biological role, plant lipoxygenases may be involved in a number of diverse aspects of plant physiology including growth and development, pest resistance, and senescence or responses to wounding. Catalyzes the hydroperoxidation of lipids containing a cis,cis-1,4-pentadiene structure. Linoleic and linolenic acids are the preferred substrates, but is also active with arachidonic acid. The products are almost exclusively the S enantiomers. This chain is Linoleate 9S-lipoxygenase 6 (LOX1.6), found in Solanum tuberosum (Potato).